The chain runs to 501 residues: Bifunctional pantoate ligase/cytidylate kinase (501 aa).

The interval 1-264 is pantoate--beta-alanine ligase; the sequence is MLSTQAELAA…CGTTRLIDHS (264 aa). 25–32 contacts ATP; the sequence is MGGLHQGH. The active-site Proton donor is the histidine 32. Glutamine 55 contributes to the (R)-pantoate binding site. Glutamine 55 lines the beta-alanine pocket. ATP is bound at residue 144-147; it reads GEKD. Glutamine 150 contacts (R)-pantoate. Residues valine 173 and 181–184 each bind ATP; that span reads LSSR. The segment at 265-501 is cytidylate kinase; the sequence is FLMTRQPLVA…PEEAWPTPAG (237 aa).

In the N-terminal section; belongs to the pantothenate synthetase family. It in the C-terminal section; belongs to the cytidylate kinase family. Type 1 subfamily.

The protein localises to the cytoplasm. It catalyses the reaction (R)-pantoate + beta-alanine + ATP = (R)-pantothenate + AMP + diphosphate + H(+). It carries out the reaction CMP + ATP = CDP + ADP. The catalysed reaction is dCMP + ATP = dCDP + ADP. Its pathway is cofactor biosynthesis; (R)-pantothenate biosynthesis; (R)-pantothenate from (R)-pantoate and beta-alanine: step 1/1. Its function is as follows. Catalyzes the condensation of pantoate with beta-alanine in an ATP-dependent reaction via a pantoyl-adenylate intermediate. In terms of biological role, catalyzes the transfer of a phosphate group from ATP to either CMP or dCMP to form CDP or dCDP and ADP, respectively. The sequence is that of Bifunctional pantoate ligase/cytidylate kinase from Parasynechococcus marenigrum (strain WH8102).